Consider the following 85-residue polypeptide: Antitoxin VapB4 (85 aa).

The protein belongs to the phD/YefM antitoxin family. As to quaternary structure, interacts with cognate toxin VapC4.

Antitoxin component of a type II toxin-antitoxin (TA) system. Antitoxin that counteracts the effect of the VapC4 toxin. The sequence is that of Antitoxin VapB4 (vapB4) from Mycobacterium tuberculosis (strain CDC 1551 / Oshkosh).